The chain runs to 86 residues: Small ribosomal subunit protein bS20 (86 aa).

This sequence belongs to the bacterial ribosomal protein bS20 family.

Functionally, binds directly to 16S ribosomal RNA. The protein is Small ribosomal subunit protein bS20 of Bifidobacterium longum subsp. infantis (strain ATCC 15697 / DSM 20088 / JCM 1222 / NCTC 11817 / S12).